The primary structure comprises 170 residues: Nucleoside-triphosphatase THEP1 (170 aa).

Residues 7–14 (GMPGVGKT) and 98–105 (IIIIDELG) each bind ATP.

The protein belongs to the THEP1 NTPase family.

It catalyses the reaction a ribonucleoside 5'-triphosphate + H2O = a ribonucleoside 5'-diphosphate + phosphate + H(+). In terms of biological role, has nucleotide phosphatase activity towards ATP, GTP, CTP, TTP and UTP. May hydrolyze nucleoside diphosphates with lower efficiency. In Methanocaldococcus jannaschii (strain ATCC 43067 / DSM 2661 / JAL-1 / JCM 10045 / NBRC 100440) (Methanococcus jannaschii), this protein is Nucleoside-triphosphatase THEP1.